Reading from the N-terminus, the 139-residue chain is Acidic phospholipase A2 Ts-A4 (139 aa).

The signal sequence occupies residues 1-16 (MRTLWILAVLLVGVEG). Disulfide bonds link C42–C132, C44–C60, C59–C111, C65–C139, C66–C104, C73–C97, and C91–C102. Y43, G45, and G47 together coordinate Ca(2+). The active site involves H63. Ca(2+) is bound at residue D64. D105 is an active-site residue.

Ca(2+) serves as cofactor. Expressed by the venom gland.

The protein localises to the secreted. It carries out the reaction a 1,2-diacyl-sn-glycero-3-phosphocholine + H2O = a 1-acyl-sn-glycero-3-phosphocholine + a fatty acid + H(+). Its function is as follows. PLA2 catalyzes the calcium-dependent hydrolysis of the 2-acyl groups in 3-sn-phosphoglycerides. The polypeptide is Acidic phospholipase A2 Ts-A4 (Trimeresurus stejnegeri (Chinese green tree viper)).